The primary structure comprises 462 residues: Probable acid phosphatase SPBC4.06 (462 aa).

The active-site Nucleophile is histidine 35. Catalysis depends on aspartate 330, which acts as the Proton donor.

The protein belongs to the histidine acid phosphatase family.

The protein localises to the mitochondrion. The enzyme catalyses a phosphate monoester + H2O = an alcohol + phosphate. The chain is Probable acid phosphatase SPBC4.06 from Schizosaccharomyces pombe (strain 972 / ATCC 24843) (Fission yeast).